A 459-amino-acid polypeptide reads, in one-letter code: Peptidyl-prolyl cis-trans isomerase FKBP4 (459 aa).

M1 is modified (N-acetylmethionine; in peptidyl-prolyl cis-trans isomerase FKBP4; alternate). A disordered region spans residues 1–24; it reads MTAEEMKATESGAQSAPLPMEGVD. Position 2 is an N-acetylthreonine; in peptidyl-prolyl cis-trans isomerase FKBP4, N-terminally processed; partial (T2). The 89-residue stretch at 50–138 folds into the PPIase FKBP-type 1 domain; the sequence is GDRVFVHYTG…VFEVELFEFK (89 aa). Position 143 is a phosphothreonine; by CK2 (T143). Residues 167-253 enclose the PPIase FKBP-type 2 domain; that stretch reads GAIVEVALEG…KYELHLKSFE (87 aa). At Y220 the chain carries Phosphotyrosine. Residues 267–400 form an interaction with tubulin region; it reads LEQSTIVKER…TQLAVCQQRI (134 aa). 3 TPR repeats span residues 270-303, 319-352, and 353-386; these read STIV…LEYE, LASH…DSNN, and EKGL…YPNN. K282 bears the N6-acetyllysine mark. R373 is modified (omega-N-methylarginine). Positions 421-459 are disordered; that stretch reads EENKAKAEASSGDHPTDTEMKEEQKSNTAGSQSQVETEA. Residues 434 to 445 show a composition bias toward basic and acidic residues; the sequence is HPTDTEMKEEQK. T436 carries the post-translational modification Phosphothreonine. Residue K441 forms a Glycyl lysine isopeptide (Lys-Gly) (interchain with G-Cter in SUMO1) linkage. Residues 446-459 show a composition bias toward polar residues; that stretch reads SNTAGSQSQVETEA. 2 positions are modified to phosphoserine: S451 and S453.

In terms of assembly, homodimer. Interacts with GLMN. Associates with HSP90AA1 and HSP70 in steroid hormone receptor complexes. Also interacts with peroxisomal phytanoyl-CoA alpha-hydroxylase (PHYH). Interacts with NR3C1 and dynein. Interacts with HSF1 in the HSP90 complex. Associates with tubulin. Interacts with MAPT/TAU. Interacts (via TPR domain) with S100A1, S100A2 and S100A6; the interaction is Ca(2+) dependent. Interaction with S100A1 and S100A2 (but not with S100A6) leads to inhibition of FKBP4-HSP90 interaction. Interacts with dynein; causes partially NR3C1 transport to the nucleus. Phosphorylation by CK2 results in loss of HSP90 binding activity. As to expression, widely expressed.

Its subcellular location is the cytoplasm. The protein resides in the cytosol. It localises to the mitochondrion. The protein localises to the nucleus. It is found in the cytoskeleton. Its subcellular location is the cell projection. The protein resides in the axon. The catalysed reaction is [protein]-peptidylproline (omega=180) = [protein]-peptidylproline (omega=0). Its activity is regulated as follows. Inhibited by FK506. Functionally, immunophilin protein with PPIase and co-chaperone activities. Component of steroid receptors heterocomplexes through interaction with heat-shock protein 90 (HSP90). May play a role in the intracellular trafficking of heterooligomeric forms of steroid hormone receptors between cytoplasm and nuclear compartments. The isomerase activity controls neuronal growth cones via regulation of TRPC1 channel opening. Also acts as a regulator of microtubule dynamics by inhibiting MAPT/TAU ability to promote microtubule assembly. May have a protective role against oxidative stress in mitochondria. The polypeptide is Peptidyl-prolyl cis-trans isomerase FKBP4 (FKBP4) (Homo sapiens (Human)).